We begin with the raw amino-acid sequence, 734 residues long: Diacylglycerol kinase alpha (734 aa).

EF-hand domains are found at residues 109 to 144 (RPEDKLEFTFKLYDTDRNGILDSSEVDRIIIQMMRM) and 154 to 189 (ELRPILQEMMKEIDYDGSGSVSLAEWLRAGATTVPL). The Ca(2+) site is built by Asp-122, Asp-124, Asn-126, Glu-133, Asp-167, Asp-169, Ser-171, Ser-173, and Glu-178. 2 Phorbol-ester/DAG-type zinc fingers span residues 204–252 (QHMW…ALPC) and 268–318 (SHVW…GHEC). A DAGKc domain is found at 371–505 (SNTHPLLVFV…MDRWSVEVIP (135 aa)). Residue Lys-483 is modified to N6-acetyllysine.

Belongs to the eukaryotic diacylglycerol kinase family. In terms of assembly, monomer.

Its subcellular location is the cytoplasm. It is found in the cytosol. The enzyme catalyses a 1,2-diacyl-sn-glycerol + ATP = a 1,2-diacyl-sn-glycero-3-phosphate + ADP + H(+). It carries out the reaction a 1-O-alkyl-sn-glycerol + ATP = a 1-O-alkyl-sn-glycero-3-phosphate + ADP + H(+). It catalyses the reaction 1-O-alkyl-2-acyl-sn-glycerol + ATP = 1-O-alkyl-2-acyl-sn-glycero-3-phosphate + ADP + H(+). The catalysed reaction is 1,2-dihexadecanoyl-sn-glycerol + ATP = 1,2-dihexadecanoyl-sn-glycero-3-phosphate + ADP + H(+). The enzyme catalyses 1-hexadecanoyl-2-(9Z-octadecenoyl)-sn-glycerol + ATP = 1-hexadecanoyl-2-(9Z-octadecenoyl)-sn-glycero-3-phosphate + ADP + H(+). It carries out the reaction 2-(9Z-octadecenoyl)-glycerol + ATP = 2-(9Z-octadecenoyl)-sn-glycero-3-phosphate + ADP + H(+). It catalyses the reaction 1,2-di-(9Z-octadecenoyl)-sn-glycerol + ATP = 1,2-di-(9Z-octadecenoyl)-sn-glycero-3-phosphate + ADP + H(+). The catalysed reaction is 1-octadecanoyl-2-(5Z,8Z,11Z,14Z-eicosatetraenoyl)-sn-glycerol + ATP = 1-octadecanoyl-2-(5Z,8Z,11Z,14Z-eicosatetraenoyl)-sn-glycero-3-phosphate + ADP + H(+). The enzyme catalyses 1,2-didecanoyl-sn-glycerol + ATP = 1,2-didecanoyl-sn-glycero-3-phosphate + ADP + H(+). It carries out the reaction 1-O-hexadecyl-2-acetyl-sn-glycerol + ATP = 1-O-hexadecyl-2-acetyl-sn-glycero-3-phosphate + ADP + H(+). It catalyses the reaction 1-O-hexadecyl-2-(5Z,8Z,11Z,14Z-eicosatetraenoyl)-sn-glycerol + ATP = 1-O-hexadecyl-2-(5Z,8Z,11Z,14Z-eicosatetraenoyl)-sn-glycero-3-phosphate + ADP + H(+). The catalysed reaction is 1-O-hexadecyl-2-(9Z-octadecenoyl)-sn-glycerol + ATP = 1-O-hexadecyl-2-(9Z-octadecenoyl)-sn-glycero-3-phosphate + ADP + H(+). The enzyme catalyses 1-O-hexadecyl-sn-glycerol + ATP = 1-O-hexadecyl-sn-glycero-3-phosphate + ADP + H(+). The protein operates within lipid metabolism; glycerolipid metabolism. Its activity is regulated as follows. Stimulated by calcium and phosphatidylserine. Functionally, diacylglycerol kinase that converts diacylglycerol/DAG into phosphatidic acid/phosphatidate/PA and regulates the respective levels of these two bioactive lipids. Thereby, acts as a central switch between the signaling pathways activated by these second messengers with different cellular targets and opposite effects in numerous biological processes. Also plays an important role in the biosynthesis of complex lipids. Can also phosphorylate 1-alkyl-2-acylglycerol in vitro as efficiently as diacylglycerol provided it contains an arachidonoyl group. Also involved in the production of alkyl-lysophosphatidic acid, another bioactive lipid, through the phosphorylation of 1-alkyl-2-acetyl glycerol. This is Diacylglycerol kinase alpha (DGKA) from Bos taurus (Bovine).